Consider the following 353-residue polypeptide: Protein XRP2 (353 aa).

Residues 1 to 37 (MGCFFSKKAKRKRNSEEEQPQQDGEEPKQYSWDKREK) form a disordered region. Residue Gly-2 is the site of N-myristoyl glycine attachment. A lipid anchor (S-palmitoyl cysteine) is attached at Cys-3. Over residues 25 to 37 (EEPKQYSWDKREK) the composition is skewed to basic and acidic residues. Residues 27–182 (PKQYSWDKRE…TWSNIHDFTP (156 aa)) enclose the C-CAP/cofactor C-like domain. GTP-binding positions include 101–102 (GS) and 118–121 (QQFR).

This sequence belongs to the TBCC family. Post-translationally, myristoylated on Gly-2; which may be required for membrane targeting. Palmitoylated on Cys-3; which may be required for plasma membrane targeting.

Its subcellular location is the cell membrane. Functionally, acts as a GTPase-activating protein (GAP) for tubulin in concert with tubulin-specific chaperone C, but does not enhance tubulin heterodimerization. Acts as a GTPase-activating protein. May act as guanine nucleotide dissociation inhibitor towards ADP-ribosylation factor-like proteins. This is Protein XRP2 (rp2) from Xenopus laevis (African clawed frog).